The primary structure comprises 112 residues: Small ribosomal subunit protein eS24 (112 aa).

A disordered region spans residues 88–112 (RGMAGEEEGNADAQDAPSGDAAEAS).

It belongs to the eukaryotic ribosomal protein eS24 family.

The protein is Small ribosomal subunit protein eS24 of Methanospirillum hungatei JF-1 (strain ATCC 27890 / DSM 864 / NBRC 100397 / JF-1).